A 365-amino-acid chain; its full sequence is 2-aminoethylphosphonate--pyruvate transaminase (365 aa).

K194 carries the N6-(pyridoxal phosphate)lysine modification.

The protein belongs to the class-V pyridoxal-phosphate-dependent aminotransferase family. PhnW subfamily. Homodimer. The cofactor is pyridoxal 5'-phosphate.

The catalysed reaction is (2-aminoethyl)phosphonate + pyruvate = phosphonoacetaldehyde + L-alanine. Functionally, involved in phosphonate degradation. This chain is 2-aminoethylphosphonate--pyruvate transaminase, found in Bacillus cereus (strain G9842).